The following is a 354-amino-acid chain: 3-dehydroquinate synthase (354 aa).

Residues 106-110, 130-131, Lys-143, and Lys-152 each bind NAD(+); these read GVIGD and TS. The Zn(2+) site is built by Glu-185, His-246, and His-262.

Belongs to the sugar phosphate cyclases superfamily. Dehydroquinate synthase family. Requires Co(2+) as cofactor. It depends on Zn(2+) as a cofactor. The cofactor is NAD(+).

Its subcellular location is the cytoplasm. It carries out the reaction 7-phospho-2-dehydro-3-deoxy-D-arabino-heptonate = 3-dehydroquinate + phosphate. It participates in metabolic intermediate biosynthesis; chorismate biosynthesis; chorismate from D-erythrose 4-phosphate and phosphoenolpyruvate: step 2/7. In terms of biological role, catalyzes the conversion of 3-deoxy-D-arabino-heptulosonate 7-phosphate (DAHP) to dehydroquinate (DHQ). This Leuconostoc mesenteroides subsp. mesenteroides (strain ATCC 8293 / DSM 20343 / BCRC 11652 / CCM 1803 / JCM 6124 / NCDO 523 / NBRC 100496 / NCIMB 8023 / NCTC 12954 / NRRL B-1118 / 37Y) protein is 3-dehydroquinate synthase.